The primary structure comprises 122 residues: Nodulation protein NolR (122 aa).

Residues 15-109 enclose the HTH arsR-type domain; the sequence is EKHEDAEIAA…ALSDIYGDDT (95 aa). The H-T-H motif DNA-binding region spans 49-68; sequence VGALAHKVGLSQSALSQHLS.

In terms of assembly, binds to the operator site in homodimeric form.

Functionally, negative transacting factor controlling the nod regulon. May control the expression of nodD1, nodD2, nodD3 and nodABC genes. In Rhizobium meliloti (Ensifer meliloti), this protein is Nodulation protein NolR (nolR).